The primary structure comprises 843 residues: MTSDTIRQTLDELLLDKNGGSSNEARAFFLSQIIDQLKLISSQTDAERQLQKLQLKDPNDNIVKATPPPPPPPPPLISILQQAPPPPPPPPPPTLKAPPPPPILGLKTPSKSLKTPTPRPKECPTSFLPKKEKKTKTRTVQWSKINASVVQDDSVWGKLAKASNVDIDFDLLDNFFGIESLAVSGAAEVVKKSTRKDAHVELLTAKRSQNVAIMLKQFKNIDELIDDVSQNKPVAEIDALQNLFGMLPQSEEEEALRRYTGDISLLSPPSSFFYRLVQIQFYRLRIETQIFLSDFSRLMRELAPNVEILIRTSQEILTSPTLPRLLLIFVNMGNYLNGNNSQGNAFGFTLNSLWKLIDLKGNKQEFSLLHLLVTCEPDLVAHLQEELSTLKDASQISFDEIKISLKTLRDGRCKLEKQLETCSGASFTQFLELIKIDCKFELDEFGANYDKLTELQYQLADYFCENRNTFQLDECLKIFNFLMNRLQQTLKEHVTRETRKLKKEEKKETQTTRECEKTMKKPEKIDLFDALTASNGGPESPRKRAAGILDMRQKLGNVRIRKLRDVTTLESSFTPPPPPPLESPTDSTSSKENESVKPAKTSTNYEMCNDLESYITSLTRKRASHLPKAPPKEEPKLPEVLPEKSKIALKIEKIPEKIDKPPLPQAAPIIPKLPQKSIKAPSTVTTRSKVPPPTAAAAVRIVSVTTTTTPTKTAELRKPGARSPKTTVATVPKVTVVPVSRVPVAPSTPLSRRMSAPVVRKPTMTAEKKREITMKPSVSTSARPSLINTSSHPMVRSPLPKMSVLEKPKPLRITRPTVIPQSPTVTSSARPSGLRQPAKPKWV.

4 disordered regions span residues 54-135 (QLKD…EKKT), 568-601 (TLES…PAKT), 748-767 (TPLS…MTAE), and 773-843 (TMKP…PKWV). Pro residues-rich tracts occupy residues 66-76 (TPPPPPPPPPL) and 83-103 (APPP…PPPI). One can recognise an FH2 domain in the interval 127-512 (FLPKKEKKTK…KEEKKETQTT (386 aa)). Composition is skewed to polar residues over residues 776–792 (PSVS…TSSH) and 819–830 (IPQSPTVTSSAR).

It belongs to the formin homology family. As to expression, expressed in the excretory cell and mostly accumulates at the tip of the excretory cell canals.

It is found in the cytoplasm. Its subcellular location is the cytoskeleton. In terms of biological role, constitutively active protein required for microtubule and F-actin growth, structural maintenance and organization during excretory cell tubulogenesis. This chain is Excretory canal abnormal protein 6, found in Caenorhabditis elegans.